We begin with the raw amino-acid sequence, 220 residues long: Glycerol-3-phosphate acyltransferase (220 aa).

The next 6 helical transmembrane spans lie at 11–31 (INVIFTLLGYLIGGIPFGYAL), 70–90 (LLVLILDLFKGMFAVFLSKLF), 96–116 (LQWMVAIASILGHCYSPFLNF), 127–147 (GSVVLLIPIESLIGLTVWFFV), 153–173 (ISSLASILGVGTATVLIFFVP), and 193–213 (MVLIFIFTLIKHAGNIFNLLA).

This sequence belongs to the PlsY family. In terms of assembly, probably interacts with PlsX.

Its subcellular location is the cell inner membrane. The enzyme catalyses an acyl phosphate + sn-glycerol 3-phosphate = a 1-acyl-sn-glycero-3-phosphate + phosphate. Its pathway is lipid metabolism; phospholipid metabolism. Catalyzes the transfer of an acyl group from acyl-phosphate (acyl-PO(4)) to glycerol-3-phosphate (G3P) to form lysophosphatidic acid (LPA). This enzyme utilizes acyl-phosphate as fatty acyl donor, but not acyl-CoA or acyl-ACP. This is Glycerol-3-phosphate acyltransferase from Helicobacter pylori (strain HPAG1).